We begin with the raw amino-acid sequence, 259 residues long: NAD kinase (259 aa).

The Proton acceptor role is filled by Asp-49. NAD(+) contacts are provided by residues 49 to 50, Arg-54, 118 to 119, Asp-148, Ala-156, 159 to 164, and Ala-183; these read DG, NE, and TAYNYS.

This sequence belongs to the NAD kinase family. A divalent metal cation is required as a cofactor.

Its subcellular location is the cytoplasm. The catalysed reaction is NAD(+) + ATP = ADP + NADP(+) + H(+). Functionally, involved in the regulation of the intracellular balance of NAD and NADP, and is a key enzyme in the biosynthesis of NADP. Catalyzes specifically the phosphorylation on 2'-hydroxyl of the adenosine moiety of NAD to yield NADP. This Xylella fastidiosa (strain 9a5c) protein is NAD kinase.